Reading from the N-terminus, the 456-residue chain is Coenzyme F420 hydrogenase subunit alpha (456 aa).

Residues C63, C66, C432, and C435 each coordinate Ni(2+).

This sequence belongs to the [NiFe]/[NiFeSe] hydrogenase large subunit family. Pentamer of two alpha chains, two beta chains and a gamma chain. Requires Ni(2+) as cofactor. Iron-sulfur cluster is required as a cofactor. FAD serves as cofactor.

The protein resides in the cell membrane. It carries out the reaction oxidized coenzyme F420-(gamma-L-Glu)(n) + H2 + H(+) = reduced coenzyme F420-(gamma-L-Glu)(n). Its function is as follows. Reduces the physiological low-potential two-electron acceptor coenzyme F420, and the artificial one-electron acceptor methylviologen. The sequence is that of Coenzyme F420 hydrogenase subunit alpha (frhA) from Methanosarcina barkeri (strain Fusaro / DSM 804).